A 245-amino-acid polypeptide reads, in one-letter code: NAD-dependent protein deacetylase (245 aa).

The Deacetylase sirtuin-type domain occupies 1–245; the sequence is MIFVQQFEEV…EFVEGLSSMK (245 aa). NAD(+)-binding residues include Ala-26, Thr-30, Phe-37, Arg-38, Gln-105, Ile-107, Asp-108, and His-123. Phe-37 contributes to the nicotinamide binding site. Nicotinamide is bound by residues Ile-107 and Asp-108. His-123 functions as the Proton acceptor in the catalytic mechanism. Zn(2+)-binding residues include Cys-131, Cys-134, Cys-151, and Cys-154. NAD(+) is bound by residues Thr-190, Ser-191, Asn-216, and Ile-234.

The protein belongs to the sirtuin family. Class U subfamily. The cofactor is Zn(2+).

The protein localises to the cytoplasm. It catalyses the reaction N(6)-acetyl-L-lysyl-[protein] + NAD(+) + H2O = 2''-O-acetyl-ADP-D-ribose + nicotinamide + L-lysyl-[protein]. NAD-dependent protein deacetylase which modulates the activities of several enzymes which are inactive in their acetylated form. The sequence is that of NAD-dependent protein deacetylase from Bacillus cereus (strain ATCC 14579 / DSM 31 / CCUG 7414 / JCM 2152 / NBRC 15305 / NCIMB 9373 / NCTC 2599 / NRRL B-3711).